The chain runs to 181 residues: Protein Syd (181 aa).

Belongs to the Syd family.

It is found in the cell inner membrane. Its function is as follows. Interacts with the SecY protein in vivo. May bind preferentially to an uncomplexed state of SecY, thus functioning either as a chelating agent for excess SecY in the cell or as a regulatory factor that negatively controls the translocase function. The protein is Protein Syd of Salmonella arizonae (strain ATCC BAA-731 / CDC346-86 / RSK2980).